The following is a 555-amino-acid chain: Formate--tetrahydrofolate ligase (555 aa).

64-71 (TPAGEGKT) lines the ATP pocket.

The protein belongs to the formate--tetrahydrofolate ligase family.

It catalyses the reaction (6S)-5,6,7,8-tetrahydrofolate + formate + ATP = (6R)-10-formyltetrahydrofolate + ADP + phosphate. The protein operates within one-carbon metabolism; tetrahydrofolate interconversion. The protein is Formate--tetrahydrofolate ligase of Dinoroseobacter shibae (strain DSM 16493 / NCIMB 14021 / DFL 12).